A 249-amino-acid chain; its full sequence is DNA repair protein RecO (249 aa).

Belongs to the RecO family.

In terms of biological role, involved in DNA repair and RecF pathway recombination. This is DNA repair protein RecO from Mycoplasma capricolum subsp. capricolum (strain California kid / ATCC 27343 / NCTC 10154).